Consider the following 309-residue polypeptide: Protein FdhE homolog (309 aa).

Belongs to the FdhE family.

It localises to the cytoplasm. Functionally, necessary for formate dehydrogenase activity. The sequence is that of Protein FdhE homolog from Pasteurella multocida (strain Pm70).